Consider the following 164-residue polypeptide: Crossover junction endodeoxyribonuclease RuvC (164 aa).

Catalysis depends on residues Asp7, Glu67, and Asp139. Residues Asp7, Glu67, and Asp139 each coordinate Mg(2+).

This sequence belongs to the RuvC family. In terms of assembly, homodimer which binds Holliday junction (HJ) DNA. The HJ becomes 2-fold symmetrical on binding to RuvC with unstacked arms; it has a different conformation from HJ DNA in complex with RuvA. In the full resolvosome a probable DNA-RuvA(4)-RuvB(12)-RuvC(2) complex forms which resolves the HJ. Requires Mg(2+) as cofactor.

It localises to the cytoplasm. The catalysed reaction is Endonucleolytic cleavage at a junction such as a reciprocal single-stranded crossover between two homologous DNA duplexes (Holliday junction).. Functionally, the RuvA-RuvB-RuvC complex processes Holliday junction (HJ) DNA during genetic recombination and DNA repair. Endonuclease that resolves HJ intermediates. Cleaves cruciform DNA by making single-stranded nicks across the HJ at symmetrical positions within the homologous arms, yielding a 5'-phosphate and a 3'-hydroxyl group; requires a central core of homology in the junction. The consensus cleavage sequence is 5'-(A/T)TT(C/G)-3'. Cleavage occurs on the 3'-side of the TT dinucleotide at the point of strand exchange. HJ branch migration catalyzed by RuvA-RuvB allows RuvC to scan DNA until it finds its consensus sequence, where it cleaves and resolves the cruciform DNA. The chain is Crossover junction endodeoxyribonuclease RuvC from Geobacter sp. (strain M21).